A 273-amino-acid chain; its full sequence is Thiazole synthase (273 aa).

K113 (schiff-base intermediate with DXP) is an active-site residue. 1-deoxy-D-xylulose 5-phosphate-binding positions include G174, 201–202 (AG), and 223–224 (NT).

The protein belongs to the ThiG family. In terms of assembly, homotetramer. Forms heterodimers with either ThiH or ThiS.

The protein resides in the cytoplasm. It catalyses the reaction [ThiS sulfur-carrier protein]-C-terminal-Gly-aminoethanethioate + 2-iminoacetate + 1-deoxy-D-xylulose 5-phosphate = [ThiS sulfur-carrier protein]-C-terminal Gly-Gly + 2-[(2R,5Z)-2-carboxy-4-methylthiazol-5(2H)-ylidene]ethyl phosphate + 2 H2O + H(+). The protein operates within cofactor biosynthesis; thiamine diphosphate biosynthesis. Its function is as follows. Catalyzes the rearrangement of 1-deoxy-D-xylulose 5-phosphate (DXP) to produce the thiazole phosphate moiety of thiamine. Sulfur is provided by the thiocarboxylate moiety of the carrier protein ThiS. In vitro, sulfur can be provided by H(2)S. The chain is Thiazole synthase from Salinibacter ruber (strain DSM 13855 / M31).